Reading from the N-terminus, the 381-residue chain is MTAATLVTLALSLSLAQHDAAPAPVAAPVEQHGQAPEAAPDAHGSPAGEPGAAVEAHAAAAEHGEAAGHEGGHDESLGAVMLHHVTDGYVIEHPGLCHGGLAWNCEWDLRETFGDSLKFGKLDMTPTKHVVMMWLASALLLVVVLGAVRKKSLVPRGLYNFIELLVAFVRNEIAVKNMGEKDADRFTPYLVTAFFFILFLNLFGLLPFSATATANLSVTVAMALFTFVITQYAAIRAMGMGGYLAHLTGGVPKSLAPLWLIMIPVEFLGLFTKPFALTVRLFANMLAGHFVILALLGLIFALGTPWVAFGSVPMALSIFLLELFVAFVQAYIFTMLSSLFIGAGLVHHGDDHGHAEEHGHAGPAAGSEHGSHVAGASPGHG.

The segment at 24 to 73 (PVAAPVEQHGQAPEAAPDAHGSPAGEPGAAVEAHAAAAEHGEAAGHEGGH) is disordered. Low complexity predominate over residues 47 to 59 (AGEPGAAVEAHAA). Residues 60–73 (AAEHGEAAGHEGGH) show a composition bias toward basic and acidic residues. The next 6 membrane-spanning stretches (helical) occupy residues 128–148 (KHVV…LGAV), 190–210 (LVTA…PFSA), 215–235 (NLSV…YAAI), 255–275 (LAPL…TKPF), 290–310 (FVIL…VAFG), and 316–336 (LSIF…FTML). Residues 351 to 360 (DHGHAEEHGH) show a composition bias toward basic and acidic residues. Residues 351 to 381 (DHGHAEEHGHAGPAAGSEHGSHVAGASPGHG) form a disordered region.

Belongs to the ATPase A chain family. F-type ATPases have 2 components, CF(1) - the catalytic core - and CF(0) - the membrane proton channel. CF(1) has five subunits: alpha(3), beta(3), gamma(1), delta(1), epsilon(1). CF(0) has three main subunits: a(1), b(2) and c(9-12). The alpha and beta chains form an alternating ring which encloses part of the gamma chain. CF(1) is attached to CF(0) by a central stalk formed by the gamma and epsilon chains, while a peripheral stalk is formed by the delta and b chains.

The protein resides in the cell inner membrane. Functionally, key component of the proton channel; it plays a direct role in the translocation of protons across the membrane. This Anaeromyxobacter dehalogenans (strain 2CP-C) protein is ATP synthase subunit a.